We begin with the raw amino-acid sequence, 61 residues long: uncharacterized protein (61 aa).

Belongs to the DUP/COS family.

This is an uncharacterized protein from Saccharomyces cerevisiae (strain ATCC 204508 / S288c) (Baker's yeast).